We begin with the raw amino-acid sequence, 478 residues long: GMP reductase (478 aa).

CBS domains are found at residues 95–152 (VVDT…VRDI) and 153–211 (ALSD…AVDA). NADP(+) contacts are provided by residues 245–247 (DTA) and 295–297 (GVG). Cys302 (thioimidate intermediate) is an active-site residue.

This sequence belongs to the IMPDH/GMPR family. GuaB1 subfamily. As to quaternary structure, homooctamer composed of two tetramers. The oligomerization state is regulated by ligands and pH. Requires a monovalent cation as cofactor.

It catalyses the reaction IMP + NH4(+) + NADP(+) = GMP + NADPH + 2 H(+). Its pathway is purine metabolism; IMP biosynthesis via salvage pathway. Its activity is regulated as follows. Activity is allosterically regulated by the ATP/GTP ratio in a pH-dependent manner. At pH 7.8, GTP has only a minor positive effect and ATP only a minor negative effect on the activity, however, at lower pH values, the effects of ATP and GTP increase. ATP-dependent inhibition can be restored by increasing GTP concentration. IMP and XMP are competitive inhibitors. Its function is as follows. Involved in the purine-salvage pathway. Catalyzes the NADPH-dependent conversion of GMP to IMP. Is not essential for viability, but may contribute to the regulation of the purine nucleotide pool by recycling GMP to IMP. The polypeptide is GMP reductase (Mycolicibacterium smegmatis (strain ATCC 700084 / mc(2)155) (Mycobacterium smegmatis)).